A 225-amino-acid chain; its full sequence is UPF0758 protein NGK_1225 (225 aa).

One can recognise an MPN domain in the interval 102–224 (TLSDPDTVAD…VRSFRQLGLM (123 aa)). Residues histidine 173, histidine 175, and aspartate 186 each contribute to the Zn(2+) site. Residues 173–186 (HNHPGGSPEPSQED) carry the JAMM motif motif.

It belongs to the UPF0758 family.

The chain is UPF0758 protein NGK_1225 from Neisseria gonorrhoeae (strain NCCP11945).